Here is a 1298-residue protein sequence, read N- to C-terminus: Phosphoribosylformylglycinamidine synthase (1298 aa).

The disordered stretch occupies residues 301–328; that stretch reads APFPGASTGSGGEIRDEGATGRGAKPKA. ATP-binding positions include 305-316, 384-386, and alanine 676; these read GASTGSGGEIRD and TGY. Aspartate 677, glutamate 716, asparagine 720, and aspartate 884 together coordinate Mg(2+). ATP is bound at residue serine 886. The Glutamine amidotransferase type-1 domain maps to 1045–1298; that stretch reads VAVLREQGVN…MFRNARVWVN (254 aa). Catalysis depends on cysteine 1138, which acts as the Nucleophile. Catalysis depends on residues histidine 1263 and glutamate 1265.

In the N-terminal section; belongs to the FGAMS family. As to quaternary structure, monomer.

The protein localises to the cytoplasm. It carries out the reaction N(2)-formyl-N(1)-(5-phospho-beta-D-ribosyl)glycinamide + L-glutamine + ATP + H2O = 2-formamido-N(1)-(5-O-phospho-beta-D-ribosyl)acetamidine + L-glutamate + ADP + phosphate + H(+). The protein operates within purine metabolism; IMP biosynthesis via de novo pathway; 5-amino-1-(5-phospho-D-ribosyl)imidazole from N(2)-formyl-N(1)-(5-phospho-D-ribosyl)glycinamide: step 1/2. In terms of biological role, phosphoribosylformylglycinamidine synthase involved in the purines biosynthetic pathway. Catalyzes the ATP-dependent conversion of formylglycinamide ribonucleotide (FGAR) and glutamine to yield formylglycinamidine ribonucleotide (FGAM) and glutamate. The polypeptide is Phosphoribosylformylglycinamidine synthase (Pseudomonas fluorescens (strain Pf0-1)).